The following is a 314-amino-acid chain: Porphobilinogen deaminase (314 aa).

Residue C243 is modified to S-(dipyrrolylmethanemethyl)cysteine.

This sequence belongs to the HMBS family. As to quaternary structure, monomer. Dipyrromethane is required as a cofactor.

It carries out the reaction 4 porphobilinogen + H2O = hydroxymethylbilane + 4 NH4(+). It participates in porphyrin-containing compound metabolism; protoporphyrin-IX biosynthesis; coproporphyrinogen-III from 5-aminolevulinate: step 2/4. Its function is as follows. Tetrapolymerization of the monopyrrole PBG into the hydroxymethylbilane pre-uroporphyrinogen in several discrete steps. The chain is Porphobilinogen deaminase from Bordetella bronchiseptica (strain ATCC BAA-588 / NCTC 13252 / RB50) (Alcaligenes bronchisepticus).